A 147-amino-acid chain; its full sequence is Hemoglobin subunit beta (147 aa).

Val2 carries the post-translational modification N-acetylvaline. Residues 3–147 (HLTGEEKSAV…VANALAHKYH (145 aa)) enclose the Globin domain. Thr13 is subject to Phosphothreonine. Ser45 bears the Phosphoserine mark. Position 60 is an N6-acetyllysine (Lys60). A heme b-binding site is contributed by His64. Residue Lys83 is modified to N6-acetyllysine. Residue His93 participates in heme b binding. Cys94 is subject to S-nitrosocysteine. N6-acetyllysine is present on Lys145.

This sequence belongs to the globin family. As to quaternary structure, heterotetramer of two alpha chains and two beta chains. As to expression, red blood cells.

Functionally, involved in oxygen transport from the lung to the various peripheral tissues. The polypeptide is Hemoglobin subunit beta (HBB) (Ateles paniscus (Black spider monkey)).